A 301-amino-acid polypeptide reads, in one-letter code: MNQIEKTGELSASRFTVRDFTELVKIGIVNSNTITAFTGMWLAFQLNGISFIQNVDVIFFTIVGSALIVAASGAFNNVIDRDIDGIMERTKNRPTMTGKISGKRALMVALVLGVVGTIMLFMTTWQAGVLGVIGVFLYVVVYSLYAKRKLVSNTVIGSFSGAVPPLIGWFAVEPSFSIVPIMLFLVMFCWQPPHFYAIAIKRKEEYAAAGIPMLPVVKGIERTKKSMFFWVILLTILPFFMFELGIVYVVLATLLNIGWLALSIYGFKMEDSIKWAKWMFVYSLNYMTILFVAMVVISIFL.

Helical transmembrane passes span 20–42 (FTEL…GMWL), 55–75 (VDVI…SGAF), 105–125 (ALMV…MTTW), 126–146 (QAGV…SLYA), 150–172 (LVSN…WFAV), 176–198 (FSIV…FYAI), 227–247 (MFFW…LGIV), 249–269 (VVLA…GFKM), and 280–300 (FVYS…ISIF).

It belongs to the UbiA prenyltransferase family. Protoheme IX farnesyltransferase subfamily. As to quaternary structure, interacts with CtaA.

The protein localises to the cell membrane. It catalyses the reaction heme b + (2E,6E)-farnesyl diphosphate + H2O = Fe(II)-heme o + diphosphate. The protein operates within porphyrin-containing compound metabolism; heme O biosynthesis; heme O from protoheme: step 1/1. Functionally, converts heme B (protoheme IX) to heme O by substitution of the vinyl group on carbon 2 of heme B porphyrin ring with a hydroxyethyl farnesyl side group. In Listeria monocytogenes serotype 4b (strain CLIP80459), this protein is Protoheme IX farnesyltransferase.